An 81-amino-acid chain; its full sequence is Putative membrane protein insertion efficiency factor (81 aa).

It belongs to the UPF0161 family.

The protein resides in the cell inner membrane. Could be involved in insertion of integral membrane proteins into the membrane. This Pseudomonas syringae pv. syringae (strain B728a) protein is Putative membrane protein insertion efficiency factor.